Here is a 214-residue protein sequence, read N- to C-terminus: Thiamine-phosphate synthase (214 aa).

Residues glutamine 37–lysine 41 and asparagine 73 each bind 4-amino-2-methyl-5-(diphosphooxymethyl)pyrimidine. Residues aspartate 74 and aspartate 93 each coordinate Mg(2+). Serine 112 contributes to the 4-amino-2-methyl-5-(diphosphooxymethyl)pyrimidine binding site. Threonine 139 to serine 141 contacts 2-[(2R,5Z)-2-carboxy-4-methylthiazol-5(2H)-ylidene]ethyl phosphate. Residue lysine 142 participates in 4-amino-2-methyl-5-(diphosphooxymethyl)pyrimidine binding. Residues glycine 171 and isoleucine 191–serine 192 contribute to the 2-[(2R,5Z)-2-carboxy-4-methylthiazol-5(2H)-ylidene]ethyl phosphate site.

It belongs to the thiamine-phosphate synthase family. Requires Mg(2+) as cofactor.

The catalysed reaction is 2-[(2R,5Z)-2-carboxy-4-methylthiazol-5(2H)-ylidene]ethyl phosphate + 4-amino-2-methyl-5-(diphosphooxymethyl)pyrimidine + 2 H(+) = thiamine phosphate + CO2 + diphosphate. The enzyme catalyses 2-(2-carboxy-4-methylthiazol-5-yl)ethyl phosphate + 4-amino-2-methyl-5-(diphosphooxymethyl)pyrimidine + 2 H(+) = thiamine phosphate + CO2 + diphosphate. It carries out the reaction 4-methyl-5-(2-phosphooxyethyl)-thiazole + 4-amino-2-methyl-5-(diphosphooxymethyl)pyrimidine + H(+) = thiamine phosphate + diphosphate. It functions in the pathway cofactor biosynthesis; thiamine diphosphate biosynthesis; thiamine phosphate from 4-amino-2-methyl-5-diphosphomethylpyrimidine and 4-methyl-5-(2-phosphoethyl)-thiazole: step 1/1. Its function is as follows. Condenses 4-methyl-5-(beta-hydroxyethyl)thiazole monophosphate (THZ-P) and 2-methyl-4-amino-5-hydroxymethyl pyrimidine pyrophosphate (HMP-PP) to form thiamine monophosphate (TMP). This chain is Thiamine-phosphate synthase, found in Listeria monocytogenes serotype 4b (strain F2365).